A 489-amino-acid chain; its full sequence is DBIRD complex subunit ZNF326 (489 aa).

Disordered stretches follow at residues Met-1–Asp-28, Glu-62–Thr-100, Val-133–Leu-181, and Pro-205–Glu-263. The span at Ser-7–Ser-22 shows a compositional bias: polar residues. The span at Glu-62–Asn-76 shows a compositional bias: basic and acidic residues. Polar residues predominate over residues Gly-91–Thr-100. A Bipartite nuclear localization signal motif is present at residues Lys-200–Lys-221. 2 consecutive C2H2 AKAP95-type zinc fingers follow at residues Cys-273 to His-295 and Cys-365 to His-388. Residues Glu-431 to Val-489 are disordered. The span at Gln-433–Gln-451 shows a compositional bias: acidic residues.

This sequence belongs to the AKAP95 family. Component of the DBIRD complex.

The protein localises to the nucleus. Core component of the DBIRD complex, a multiprotein complex that acts at the interface between core mRNP particles and RNA polymerase II (RNAPII) and integrates transcript elongation with the regulation of alternative splicing. This Xenopus tropicalis (Western clawed frog) protein is DBIRD complex subunit ZNF326 (znf326).